Here is a 466-residue protein sequence, read N- to C-terminus: Cysteine--tRNA ligase (466 aa).

Cysteine 29 is a binding site for Zn(2+). A 'HIGH' region motif is present at residues 31 to 41 (PTVYDFAHIGN). Zn(2+)-binding residues include cysteine 210, histidine 235, and glutamate 239. Positions 267-271 (KMSKS) match the 'KMSKS' region motif. Lysine 270 provides a ligand contact to ATP.

Belongs to the class-I aminoacyl-tRNA synthetase family. Monomer. Zn(2+) serves as cofactor.

The protein resides in the cytoplasm. It catalyses the reaction tRNA(Cys) + L-cysteine + ATP = L-cysteinyl-tRNA(Cys) + AMP + diphosphate. This is Cysteine--tRNA ligase from Solibacter usitatus (strain Ellin6076).